The following is a 164-amino-acid chain: Phosphopantetheine adenylyltransferase (164 aa).

T14 is a substrate binding site. ATP is bound by residues T14 to F15 and H22. Residues K46, M78, and R92 each contribute to the substrate site. ATP contacts are provided by residues G93–R95, E103, and H128–T134.

The protein belongs to the bacterial CoaD family. In terms of assembly, homohexamer. Mg(2+) is required as a cofactor.

It localises to the cytoplasm. The catalysed reaction is (R)-4'-phosphopantetheine + ATP + H(+) = 3'-dephospho-CoA + diphosphate. The protein operates within cofactor biosynthesis; coenzyme A biosynthesis; CoA from (R)-pantothenate: step 4/5. Reversibly transfers an adenylyl group from ATP to 4'-phosphopantetheine, yielding dephospho-CoA (dPCoA) and pyrophosphate. The sequence is that of Phosphopantetheine adenylyltransferase from Vibrio vulnificus (strain CMCP6).